The sequence spans 385 residues: Alanine racemase (385 aa).

Residue K40 is the Proton acceptor; specific for D-alanine of the active site. K40 is modified (N6-(pyridoxal phosphate)lysine). R139 contributes to the substrate binding site. Y268 functions as the Proton acceptor; specific for L-alanine in the catalytic mechanism. M315 contacts substrate.

This sequence belongs to the alanine racemase family. It depends on pyridoxal 5'-phosphate as a cofactor.

It carries out the reaction L-alanine = D-alanine. Its pathway is amino-acid biosynthesis; D-alanine biosynthesis; D-alanine from L-alanine: step 1/1. In terms of biological role, catalyzes the interconversion of L-alanine and D-alanine. May also act on other amino acids. This chain is Alanine racemase (alr), found in Anoxybacillus flavithermus (strain DSM 21510 / WK1).